The following is an 81-amino-acid chain: Cytochrome b559 subunit alpha (81 aa).

A helical membrane pass occupies residues Val21–Trp35. A heme-binding site is contributed by His23.

The protein belongs to the PsbE/PsbF family. As to quaternary structure, heterodimer of an alpha subunit and a beta subunit. PSII is composed of 1 copy each of membrane proteins PsbA, PsbB, PsbC, PsbD, PsbE, PsbF, PsbH, PsbI, PsbJ, PsbK, PsbL, PsbM, PsbT, PsbX, PsbY, PsbZ, Psb30/Ycf12, peripheral proteins PsbO, CyanoQ (PsbQ), PsbU, PsbV and a large number of cofactors. It forms dimeric complexes. Heme b is required as a cofactor.

The protein resides in the cellular thylakoid membrane. This b-type cytochrome is tightly associated with the reaction center of photosystem II (PSII). PSII is a light-driven water:plastoquinone oxidoreductase that uses light energy to abstract electrons from H(2)O, generating O(2) and a proton gradient subsequently used for ATP formation. It consists of a core antenna complex that captures photons, and an electron transfer chain that converts photonic excitation into a charge separation. The chain is Cytochrome b559 subunit alpha from Picosynechococcus sp. (strain ATCC 27264 / PCC 7002 / PR-6) (Agmenellum quadruplicatum).